A 334-amino-acid chain; its full sequence is NAD-dependent protein deacetylase sirtuin-3 (334 aa).

Positions 53–315 constitute a Deacetylase sirtuin-type domain; sequence SSEKKFSLQD…ERLVDLLGWT (263 aa). Lys-57 carries the N6-succinyllysine modification. Residues 80–100 and 163–166 contribute to the NAD(+) site; these read GAGI…SGLY and QNID. The Proton acceptor role is filled by His-183. 4 residues coordinate Zn(2+): Cys-191, Cys-194, Cys-215, and Cys-218. Residues 254–256 and 279–281 each bind NAD(+); these read GTS and NRD.

The protein belongs to the sirtuin family. Class I subfamily. In terms of assembly, upon metabolic stress, forms a complex composed of FOXO3, SIRT3 and mitochondrial RNA polymerase POLRMT; the complex is recruited to mtDNA in a SIRT3-dependent manner. Also forms a complex composed of FOXO3, SIRT3, TFAM and POLRMT. Interacts with NDUFA9, ACSS1, IDH2 and GDH. Interacts with PCCA. Zn(2+) is required as a cofactor. In terms of tissue distribution, expressed in cardiomyocytes (at protein level). Expressed in the brain, liver, kidney and testes. Expressed in skeletal muscles (at protein level).

The protein localises to the mitochondrion matrix. The protein resides in the cytoplasm. The enzyme catalyses N(6)-acetyl-L-lysyl-[protein] + NAD(+) + H2O = 2''-O-acetyl-ADP-D-ribose + nicotinamide + L-lysyl-[protein]. It catalyses the reaction N(6)-[(S)-lactoyl]-L-lysyl-[protein] + NAD(+) + H2O = 2''-O-(S)-lactoyl-ADP-D-ribose + nicotinamide + L-lysyl-[protein]. Its function is as follows. NAD-dependent protein deacetylase. Activates or deactivates mitochondrial target proteins by deacetylating key lysine residues. Known targets include ACSS1, IDH, GDH, PDHA1, SOD2, LCAD, SDHA, MRPL12 and the ATP synthase subunit ATP5PO. Contributes to the regulation of the cellular energy metabolism. Important for regulating tissue-specific ATP levels. In response to metabolic stress, deacetylates transcription factor FOXO3 and recruits FOXO3 and mitochondrial RNA polymerase POLRMT to mtDNA to promote mtDNA transcription. Acts as a regulator of ceramide metabolism by mediating deacetylation of ceramide synthases CERS1, CERS2 and CERS6, thereby increasing their activity and promoting mitochondrial ceramide accumulation. Regulates hepatic lipogenesis. Uses NAD(+) substrate imported by SLC25A47, triggering downstream activation of PRKAA1/AMPK-alpha signaling cascade that ultimately downregulates sterol regulatory element-binding protein (SREBP) transcriptional activities and ATP-consuming lipogenesis to restore cellular energy balance. In addition to protein deacetylase activity, also acts as a protein-lysine deacylase by mediating delactylation of proteins, such as CCNE2 and 'Lys-16' of histone H4 (H4K16la). The sequence is that of NAD-dependent protein deacetylase sirtuin-3 from Mus musculus (Mouse).